A 327-amino-acid polypeptide reads, in one-letter code: Probable cell division protein WhiA (327 aa).

The segment at residues 275-308 (SLEELGRLADPPMTKDAVAGRIRRLLSMADRKAK) is a DNA-binding region (H-T-H motif). Positions 304-327 (DRKAKQDGIPDTESAVTPDLLEDA) are disordered.

The protein belongs to the WhiA family.

In terms of biological role, involved in cell division and chromosome segregation. The sequence is that of Probable cell division protein WhiA from Mycolicibacterium gilvum (strain PYR-GCK) (Mycobacterium gilvum (strain PYR-GCK)).